A 233-amino-acid polypeptide reads, in one-letter code: Uridylate kinase (233 aa).

9–10 serves as a coordination point for ATP; the sequence is GS. G43 lines the UMP pocket. The ATP site is built by G44 and R48. UMP is bound by residues D65 and 113-119; that span reads VTPGQTT. 3 residues coordinate ATP: T139, Y145, and D148.

Belongs to the UMP kinase family. Homohexamer.

Its subcellular location is the cytoplasm. It carries out the reaction UMP + ATP = UDP + ADP. It participates in pyrimidine metabolism; CTP biosynthesis via de novo pathway; UDP from UMP (UMPK route): step 1/1. With respect to regulation, inhibited by UTP. Functionally, catalyzes the reversible phosphorylation of UMP to UDP. In Methanosarcina acetivorans (strain ATCC 35395 / DSM 2834 / JCM 12185 / C2A), this protein is Uridylate kinase.